The sequence spans 449 residues: tRNA-2-methylthio-N(6)-dimethylallyladenosine synthase (449 aa).

The region spanning 4 to 119 is the MTTase N-terminal domain; sequence RTFHIETFGC…APQALDRLVE (116 aa). Cys-13, Cys-48, Cys-82, Cys-158, Cys-162, and Cys-165 together coordinate [4Fe-4S] cluster. Residues 144–375 form the Radical SAM core domain; the sequence is GAVPASVFVN…QTLQNRLTER (232 aa). Residues 378 to 446 form the TRAM domain; the sequence is QDMVGRKVEV…KHSLLAEQAG (69 aa).

The protein belongs to the methylthiotransferase family. MiaB subfamily. In terms of assembly, monomer. [4Fe-4S] cluster is required as a cofactor.

The protein localises to the cytoplasm. The catalysed reaction is N(6)-dimethylallyladenosine(37) in tRNA + (sulfur carrier)-SH + AH2 + 2 S-adenosyl-L-methionine = 2-methylsulfanyl-N(6)-dimethylallyladenosine(37) in tRNA + (sulfur carrier)-H + 5'-deoxyadenosine + L-methionine + A + S-adenosyl-L-homocysteine + 2 H(+). Functionally, catalyzes the methylthiolation of N6-(dimethylallyl)adenosine (i(6)A), leading to the formation of 2-methylthio-N6-(dimethylallyl)adenosine (ms(2)i(6)A) at position 37 in tRNAs that read codons beginning with uridine. The protein is tRNA-2-methylthio-N(6)-dimethylallyladenosine synthase of Nitratidesulfovibrio vulgaris (strain ATCC 29579 / DSM 644 / CCUG 34227 / NCIMB 8303 / VKM B-1760 / Hildenborough) (Desulfovibrio vulgaris).